A 303-amino-acid chain; its full sequence is Elongation factor Ts (303 aa).

The segment at 81–84 (TDFV) is involved in Mg(2+) ion dislocation from EF-Tu.

This sequence belongs to the EF-Ts family.

It is found in the cytoplasm. Associates with the EF-Tu.GDP complex and induces the exchange of GDP to GTP. It remains bound to the aminoacyl-tRNA.EF-Tu.GTP complex up to the GTP hydrolysis stage on the ribosome. The sequence is that of Elongation factor Ts from Mesomycoplasma hyopneumoniae (strain 7448) (Mycoplasma hyopneumoniae).